We begin with the raw amino-acid sequence, 70 residues long: Translational regulator CsrA (70 aa).

This sequence belongs to the CsrA/RsmA family. As to quaternary structure, homodimer; the beta-strands of each monomer intercalate to form a hydrophobic core, while the alpha-helices form wings that extend away from the core.

Its subcellular location is the cytoplasm. Its function is as follows. A translational regulator that binds mRNA to regulate translation initiation and/or mRNA stability. Usually binds in the 5'-UTR at or near the Shine-Dalgarno sequence preventing ribosome-binding, thus repressing translation. Its main target seems to be the major flagellin gene, while its function is anatagonized by FliW. The polypeptide is Translational regulator CsrA (Rhodopirellula baltica (strain DSM 10527 / NCIMB 13988 / SH1)).